We begin with the raw amino-acid sequence, 311 residues long: Tyrosine recombinase XerD (311 aa).

Residues 3–88 (DMSAAYVEAF…ALRQFYKFLY (86 aa)) form the Core-binding (CB) domain. One can recognise a Tyr recombinase domain in the interval 109-298 (TLPKTLSIED…LEERLHDLVQ (190 aa)). Active-site residues include Arg-156, Lys-180, His-250, Arg-253, and His-276. The O-(3'-phospho-DNA)-tyrosine intermediate role is filled by Tyr-285.

It belongs to the 'phage' integrase family. XerD subfamily. As to quaternary structure, forms a cyclic heterotetrameric complex composed of two molecules of XerC and two molecules of XerD.

The protein localises to the cytoplasm. In terms of biological role, site-specific tyrosine recombinase, which acts by catalyzing the cutting and rejoining of the recombining DNA molecules. The XerC-XerD complex is essential to convert dimers of the bacterial chromosome into monomers to permit their segregation at cell division. It also contributes to the segregational stability of plasmids. The polypeptide is Tyrosine recombinase XerD (Rhizobium meliloti (strain 1021) (Ensifer meliloti)).